Here is a 592-residue protein sequence, read N- to C-terminus: Frizzled-9 (592 aa).

The signal sequence occupies residues 1-23; the sequence is MAVPPLLRGALLLWQLLATGGAA. Topologically, residues 24 to 230 are extracellular; that stretch reads LEIGRFDPER…EVFWSRRDKD (207 aa). Positions 35–156 constitute an FZ domain; the sequence is RGPAPCQAME…NDPHALCMEA (122 aa). 5 disulfides stabilise this stretch: C40/C101, C48/C94, C85/C123, C112/C153, and C116/C140. Residues 59–173 form a required for Wnt-activated receptor activity region; that stretch reads PNLLGHTSQG…PTEPHKGLGM (115 aa). Residues 231–251 traverse the membrane as a helical segment; it reads FALVWMAVWSALCFFSTAFTV. At 252–267 the chain is on the cytoplasmic side; that stretch reads FTFLLEPHRFQYPERP. The chain crosses the membrane as a helical span at residues 268-288; sequence IIFLSMCYNVYSLAFLIRAVA. Over 289-314 the chain is Extracellular; it reads GAQSVACDQEAGALYVIQEGLENTGC. Residues 315 to 335 form a helical membrane-spanning segment; it reads TLVFLLLYYFGMASSLWWVVL. Over 336–356 the chain is Cytoplasmic; sequence TLTWFLAAGKKWGHEAIEAHG. A helical membrane pass occupies residues 357–377; that stretch reads SYFHMAAWGLPALKTIVVLTL. Over 378 to 401 the chain is Extracellular; that stretch reads RKVAGDELTGLCYVASMDPAALTG. Residues 402–422 form a helical membrane-spanning segment; sequence FVLVPLSCYLVLGTSFLLTGF. Over 423–448 the chain is Cytoplasmic; that stretch reads VALFHIRKIMKTGGTNTEKLEKLMVK. The helical transmembrane segment at 449-469 threads the bilayer; it reads IGVFSILYTVPATCVIVCYVY. The Extracellular segment spans residues 470–509; sequence ERLNMDFWRLRATEQPCTAAAVPGGRRDCSLPGGSVPTVA. The helical transmembrane segment at 510-530 threads the bilayer; the sequence is VFMLKIFMSLVVGITSGVWVW. At 531-592 the chain is on the cytoplasmic side; that stretch reads SSKTFQTWQS…DPSLENPTHL (62 aa). A Lys-Thr-X-X-X-Trp motif, mediates interaction with the PDZ domain of Dvl family members motif is present at residues 533–538; it reads KTFQTW. The required for CTNNB1 accumulation and TCF transcription factor activity stretch occupies residues 555–592; sequence ACRTPGGYGRGTHCHYKAPTVVLHMTKTDPSLENPTHL.

It belongs to the G-protein coupled receptor Fz/Smo family. Ubiquitinated by ZNRF3, leading to its degradation by the proteasome.

The protein resides in the cell membrane. Its function is as follows. Receptor for WNT2 that is coupled to the beta-catenin canonical signaling pathway, which leads to the activation of disheveled proteins, inhibition of GSK-3 kinase, nuclear accumulation of beta-catenin and activation of Wnt target genes. Plays a role in neuromuscular junction (NMJ) assembly by negatively regulating the clustering of acetylcholine receptors (AChR) through the beta-catenin canonical signaling pathway. May play a role in neural progenitor cells (NPCs) viability through the beta-catenin canonical signaling pathway by negatively regulating cell cycle arrest leading to inhibition of neuron apoptotic process. During hippocampal development, regulates neuroblast proliferation and apoptotic cell death. Controls bone formation through non canonical Wnt signaling mediated via ISG15. Positively regulates bone regeneration through non canonical Wnt signaling. The polypeptide is Frizzled-9 (Rattus norvegicus (Rat)).